The following is a 277-amino-acid chain: Shikimate dehydrogenase (NADP(+)) (277 aa).

Shikimate-binding positions include 15 to 17 (SLS) and threonine 62. Catalysis depends on lysine 66, which acts as the Proton acceptor. Shikimate-binding residues include asparagine 87 and aspartate 102. NADP(+) contacts are provided by residues 127 to 131 (GAGGA), 151 to 156 (NRTVDK), and isoleucine 219. Shikimate is bound at residue tyrosine 221. Position 242 (glycine 242) interacts with NADP(+).

Belongs to the shikimate dehydrogenase family. As to quaternary structure, homodimer.

The catalysed reaction is shikimate + NADP(+) = 3-dehydroshikimate + NADPH + H(+). It participates in metabolic intermediate biosynthesis; chorismate biosynthesis; chorismate from D-erythrose 4-phosphate and phosphoenolpyruvate: step 4/7. Involved in the biosynthesis of the chorismate, which leads to the biosynthesis of aromatic amino acids. Catalyzes the reversible NADPH linked reduction of 3-dehydroshikimate (DHSA) to yield shikimate (SA). The protein is Shikimate dehydrogenase (NADP(+)) of Bacillus cereus (strain ATCC 10987 / NRS 248).